We begin with the raw amino-acid sequence, 647 residues long: Acetyl-coenzyme A synthetase (647 aa).

Residues 190-193 (RGGK), T310, and N334 each bind CoA. ATP-binding positions include 386 to 388 (GEP), 410 to 415 (DTWWQT), D499, and R514. S522 serves as a coordination point for CoA. R525 serves as a coordination point for ATP. Mg(2+) contacts are provided by V536, H538, and V541. Residue R583 participates in CoA binding. K608 carries the post-translational modification N6-acetyllysine.

It belongs to the ATP-dependent AMP-binding enzyme family. It depends on Mg(2+) as a cofactor. In terms of processing, acetylated. Deacetylation by the SIR2-homolog deacetylase activates the enzyme.

It carries out the reaction acetate + ATP + CoA = acetyl-CoA + AMP + diphosphate. Functionally, catalyzes the conversion of acetate into acetyl-CoA (AcCoA), an essential intermediate at the junction of anabolic and catabolic pathways. AcsA undergoes a two-step reaction. In the first half reaction, AcsA combines acetate with ATP to form acetyl-adenylate (AcAMP) intermediate. In the second half reaction, it can then transfer the acetyl group from AcAMP to the sulfhydryl group of CoA, forming the product AcCoA. The polypeptide is Acetyl-coenzyme A synthetase (Xanthomonas axonopodis pv. citri (strain 306)).